The sequence spans 337 residues: Ornithine carbamoyltransferase (337 aa).

Carbamoyl phosphate-binding positions include 57–60, glutamine 84, arginine 108, and 135–138; these read STRT and HPTQ. L-ornithine-binding positions include asparagine 167, aspartate 231, and 235 to 236; that span reads SM. Carbamoyl phosphate is bound by residues 272–273 and arginine 317; that span reads CL.

The protein belongs to the aspartate/ornithine carbamoyltransferase superfamily. OTCase family.

Its subcellular location is the cytoplasm. The enzyme catalyses carbamoyl phosphate + L-ornithine = L-citrulline + phosphate + H(+). It participates in amino-acid degradation; L-arginine degradation via ADI pathway; carbamoyl phosphate from L-arginine: step 2/2. Functionally, reversibly catalyzes the transfer of the carbamoyl group from carbamoyl phosphate (CP) to the N(epsilon) atom of ornithine (ORN) to produce L-citrulline. The sequence is that of Ornithine carbamoyltransferase from Streptococcus equi subsp. zooepidemicus (strain MGCS10565).